The chain runs to 159 residues: Large ribosomal subunit protein uL23m (159 aa).

It belongs to the universal ribosomal protein uL23 family. As to quaternary structure, component of the mitochondrial ribosome large subunit (39S) which comprises a 16S rRNA and about 50 distinct proteins.

It is found in the mitochondrion. In Caenorhabditis elegans, this protein is Large ribosomal subunit protein uL23m (mrpl-23).